The following is a 93-amino-acid chain: Small ribosomal subunit protein uS19 (93 aa).

This sequence belongs to the universal ribosomal protein uS19 family.

Its function is as follows. Protein S19 forms a complex with S13 that binds strongly to the 16S ribosomal RNA. The sequence is that of Small ribosomal subunit protein uS19 from Tropheryma whipplei (strain TW08/27) (Whipple's bacillus).